A 244-amino-acid chain; its full sequence is 5-oxoprolinase subunit A (244 aa).

Belongs to the LamB/PxpA family. As to quaternary structure, forms a complex composed of PxpA, PxpB and PxpC.

It carries out the reaction 5-oxo-L-proline + ATP + 2 H2O = L-glutamate + ADP + phosphate + H(+). Functionally, catalyzes the cleavage of 5-oxoproline to form L-glutamate coupled to the hydrolysis of ATP to ADP and inorganic phosphate. The chain is 5-oxoprolinase subunit A from Shigella boydii serotype 18 (strain CDC 3083-94 / BS512).